Reading from the N-terminus, the 382-residue chain is Intermediate transcription factor 3 large subunit (382 aa).

Belongs to the orthopoxvirus OPG150 family. In terms of assembly, heterodimerizes with protein A8 to form the virus intermediate transcription factor (VITF)-3.

In terms of biological role, acts with RNA polymerase to initiate transcription from intermediate gene promoters. The sequence is that of Intermediate transcription factor 3 large subunit (OPG150) from Homo sapiens (Human).